The chain runs to 435 residues: Serine--tRNA ligase (435 aa).

An L-serine-binding site is contributed by T242 to E244. An ATP-binding site is contributed by R273–E275. Residue E296 coordinates L-serine. E360 to S363 serves as a coordination point for ATP. S396 lines the L-serine pocket.

The protein belongs to the class-II aminoacyl-tRNA synthetase family. Type-1 seryl-tRNA synthetase subfamily. As to quaternary structure, homodimer. The tRNA molecule binds across the dimer.

The protein resides in the cytoplasm. It catalyses the reaction tRNA(Ser) + L-serine + ATP = L-seryl-tRNA(Ser) + AMP + diphosphate + H(+). The enzyme catalyses tRNA(Sec) + L-serine + ATP = L-seryl-tRNA(Sec) + AMP + diphosphate + H(+). Its pathway is aminoacyl-tRNA biosynthesis; selenocysteinyl-tRNA(Sec) biosynthesis; L-seryl-tRNA(Sec) from L-serine and tRNA(Sec): step 1/1. Its function is as follows. Catalyzes the attachment of serine to tRNA(Ser). Is also able to aminoacylate tRNA(Sec) with serine, to form the misacylated tRNA L-seryl-tRNA(Sec), which will be further converted into selenocysteinyl-tRNA(Sec). The protein is Serine--tRNA ligase of Vibrio vulnificus (strain YJ016).